Consider the following 159-residue polypeptide: Nucleoside diphosphate kinase (159 aa).

Residues lysine 14, phenylalanine 62, arginine 90, threonine 96, and arginine 107 each contribute to the ATP site. Histidine 123 serves as the catalytic Pros-phosphohistidine intermediate.

The protein belongs to the NDK family. The cofactor is Mg(2+).

The protein localises to the cytoplasm. It carries out the reaction a 2'-deoxyribonucleoside 5'-diphosphate + ATP = a 2'-deoxyribonucleoside 5'-triphosphate + ADP. The catalysed reaction is a ribonucleoside 5'-diphosphate + ATP = a ribonucleoside 5'-triphosphate + ADP. In terms of biological role, major role in the synthesis of nucleoside triphosphates other than ATP. The ATP gamma phosphate is transferred to the NDP beta phosphate via a ping-pong mechanism, using a phosphorylated active-site intermediate. The polypeptide is Nucleoside diphosphate kinase (Pyrococcus abyssi (strain GE5 / Orsay)).